We begin with the raw amino-acid sequence, 256 residues long: Small ribosomal subunit protein eS1 (256 aa).

Residues 1 to 18 show a composition bias toward basic residues; that stretch reads MAVGKNKRLSKGKKGLKK. The interval 1 to 20 is disordered; that stretch reads MAVGKNKRLSKGKKGLKKRT. The residue at position 2 (Ala-2) is an N-acetylalanine; partial.

The protein belongs to the eukaryotic ribosomal protein eS1 family. Component of the small ribosomal subunit. Mature ribosomes consist of a small (40S) and a large (60S) subunit. The 40S subunit contains about 33 different proteins and 1 molecule of RNA (18S). The 60S subunit contains about 49 different proteins and 3 molecules of RNA (25S, 5.8S and 5S).

The protein resides in the cytoplasm. This is Small ribosomal subunit protein eS1 (rps1) from Talaromyces marneffei (strain ATCC 18224 / CBS 334.59 / QM 7333) (Penicillium marneffei).